The following is a 7311-amino-acid chain: MAM and LDL-receptor class A domain-containing protein 2 (7311 aa).

MAM domains are found at residues 4 to 171 (AYCD…SCVT), 199 to 361 (LDCD…FCSP), 363 to 530 (KQCT…VCPP), 532 to 695 (GDCN…NCPV), 727 to 887 (YDCT…QCPV), 889 to 1050 (MQCS…ACPL), 1052 to 1220 (GDCT…RCRL), 1228 to 1392 (FDCN…SCPS), 1394 to 1557 (GMCS…SCPA), 1559 to 1722 (GDCS…NCIQ), 1755 to 1918 (NDCN…KCPS), 1920 to 2087 (TDCT…PCPL), 2089 to 2254 (GDCD…RCSV), 2274 to 2437 (NNCT…PCPP), 2439 to 2601 (TVCD…PCPP), and 2603 to 2771 (GSCD…YCVG). The segment at 2461-2481 (WKRDSGGTPSAGTGPSRDHTT) is disordered. Residues 2466-2475 (GGTPSAGTGP) are compositionally biased toward low complexity. P-type domains are found at residues 2771-2817 (GLCS…FYHP) and 2818-2862 (SACA…FHGP). Disulfide bonds link C2773–C2802, C2784–C2801, C2795–C2813, C2820–C2847, C2831–C2846, and C2841–C2858. MAM domains are found at residues 2883–3048 (WDCT…TCPP), 3050–3214 (RECD…PCPP), 3216–3384 (GSCD…FCPS), and 3429–3587 (GACT…NCTL). The region spanning 3593–3628 (SCGQQHRCIRGSCIDRGRVCDYTDDCGDNSDEQNCY) is the LDL-receptor class A 1 domain. 3 disulfides stabilise this stretch: C3594/C3605, C3600/C3618, and C3612/C3627. Residues 3632-3794 (YRCSFEKSLC…DLSMTSSCQS (163 aa)) form the MAM 21 domain. 2 LDL-receptor class A domains span residues 3814-3850 (PCPR…VNCG) and 4016-4054 (SCIS…STCA). 3 disulfides stabilise this stretch: C3815–C3827, C3822–C3840, and C3834–C3849. The 162-residue stretch at 3850–4011 (GSCSFEPGLC…DDVTFQGCAL (162 aa)) folds into the MAM 22 domain. Intrachain disulfides connect C4017–C4029, C4024–C4042, and C4036–C4053. The MAM 23 domain occupies 4058–4221 (ERCNFEQDLC…DVSFTPNCRP (164 aa)). In terms of domain architecture, LDL-receptor class A 4 spans 4239-4276 (GCQPGKFKCANGGNCISVSKVCNFYSDCSGGSDEMNCP). Intrachain disulfides connect C4240-C4253, C4247-C4266, and C4260-C4275. The 162-residue stretch at 4277–4438 (ATCNFQNSFC…DDVSFEHCAE (162 aa)) folds into the MAM 24 domain. In terms of domain architecture, LDL-receptor class A 5 spans 4444–4483 (TCSGLSVFRCQSGHCIAMSGKCDFEPDCCDGSEETNIVCA). Disulfide bonds link C4445–C4458, C4453–C4471, and C4465–C4482. Positions 4486 to 4646 (NRCNFEAGLC…DISFTPDCVV (161 aa)) constitute an MAM 25 domain. LDL-receptor class A domains follow at residues 4660-4699 (PTQP…DLCG) and 4859-4899 (YCSG…QSCS). Cystine bridges form between C4668–C4687, C4681–C4698, C4860–C4876, C4871–C4889, and C4883–C4898. In terms of domain architecture, MAM 26 spans 4700 to 4862 (WPCDFQRGTC…NNYTLTYCSG (163 aa)). Positions 4903 to 5063 (SRCTFENGLC…SIAMKPSCQQ (161 aa)) constitute an MAM 27 domain. An LDL-receptor class A 8 domain is found at 5085 to 5122 (NCVLPQVPCVSDGKCVSPSQVCDFNLDCADASDERSCP). Cystine bridges form between C5086–C5099, C5093–C5112, and C5106–C5121. The MAM 28 domain maps to 5123 to 5281 (HMCTFESDQC…DDIKFVDCAL (159 aa)). Positions 5287–5322 (SCPSQFTCARNSCVSNDYVCDFNDDCGDGSDETLCG) constitute an LDL-receptor class A 9 domain. 3 disulfides stabilise this stretch: C5288/C5299, C5294/C5312, and C5306/C5321. The region spanning 5326-5489 (TRCDFSRGSC…DVSFTTGCKQ (164 aa)) is the MAM 29 domain. Residues 5513–5552 (QCTTAEFNCFNQGSGACIPSTQVCNFQPNCNDGVDEQNCA) enclose the LDL-receptor class A 10 domain. 3 disulfide bridges follow: C5514–C5529, C5521–C5542, and C5536–C5551. The MAM 30 domain maps to 5554–5719 (TKCSFDGGDF…DDIEFLNCVP (166 aa)). Residues 5725-5763 (KCTADEFQCARGGCIPKTSVCDFKADCMVGDVSDESSCS) enclose the LDL-receptor class A 11 domain. Disulfide bonds link C5726-C5738, C5733-C5751, and C5745-C5762. Residues 5768–5935 (GQCDFEHGLC…LTPGCQICTD (168 aa)) form the MAM 31 domain. The LDL-receptor class A 12 domain occupies 5957-5993 (PCSLQQYVCKNLRCVDKAQICNFKDDCGDNSDELPCG). 3 disulfides stabilise this stretch: C5958-C5970, C5965-C5983, and C5977-C5992. One can recognise an MAM 32 domain in the interval 5994 to 6156 (SNCTFEGDCY…DISFTDNCFV (163 aa)). The disordered stretch occupies residues 6014–6034 (NFHWRRRNGKTPSVGTGPTND). The segment covering 6023–6034 (KTPSVGTGPTND) has biased composition (polar residues). An LDL-receptor class A 13 domain is found at 6161–6200 (TCTPNEVKCRTSGHCVAEQRVCDHVKDCNDGTDEDALICS). 3 disulfide bridges follow: C6162–C6175, C6169–C6188, and C6182–C6199. The 162-residue stretch at 6204-6365 (ASCDFDVNWC…DISFSAGCYK (162 aa)) folds into the MAM 33 domain. The region spanning 6377-6414 (RCSKVQFYCKADDLCINIHWKCDGEKDCTDGADEMLCP) is the LDL-receptor class A 14 domain. 3 disulfides stabilise this stretch: C6378-C6391, C6385-C6404, and C6398-C6413. MAM domains lie at 6430 to 6590 (ANCN…NCAK), 6606 to 6779 (LDED…NCDF), 6808 to 6965 (GDCT…QCQF), and 7173 to 7311 (GSCN…YNNL).

In terms of tissue distribution, component of the acid-insoluble and acid-soluble organic matrix of the aragonitic skeleton (at protein level).

It is found in the secreted. The protein is MAM and LDL-receptor class A domain-containing protein 2 of Acropora millepora (Staghorn coral).